The sequence spans 207 residues: Large ribosomal subunit protein uL4 (207 aa).

Positions 44-58 are enriched in basic and acidic residues; sequence RAPTRATRERSDVAR. Residues 44–82 are disordered; the sequence is RAPTRATRERSDVARSGKKFGRQKGGGTARHGDRRSPIF.

Belongs to the universal ribosomal protein uL4 family. As to quaternary structure, part of the 50S ribosomal subunit.

Its function is as follows. One of the primary rRNA binding proteins, this protein initially binds near the 5'-end of the 23S rRNA. It is important during the early stages of 50S assembly. It makes multiple contacts with different domains of the 23S rRNA in the assembled 50S subunit and ribosome. Functionally, forms part of the polypeptide exit tunnel. The chain is Large ribosomal subunit protein uL4 from Zymomonas mobilis subsp. mobilis (strain ATCC 31821 / ZM4 / CP4).